The primary structure comprises 274 residues: Large ribosomal subunit protein uL2 (274 aa).

Positions Val-224–Lys-274 are disordered. Positions Tyr-257–Lys-274 are enriched in basic residues.

The protein belongs to the universal ribosomal protein uL2 family. As to quaternary structure, part of the 50S ribosomal subunit. Forms a bridge to the 30S subunit in the 70S ribosome.

Functionally, one of the primary rRNA binding proteins. Required for association of the 30S and 50S subunits to form the 70S ribosome, for tRNA binding and peptide bond formation. It has been suggested to have peptidyltransferase activity; this is somewhat controversial. Makes several contacts with the 16S rRNA in the 70S ribosome. This chain is Large ribosomal subunit protein uL2, found in Francisella tularensis subsp. tularensis (strain FSC 198).